Consider the following 435-residue polypeptide: MTNSKLTETLTFECETGNYHTFCPISCVAWLYQKIEDSFFLVIGTKTCGYFLQNALGVMIFAEPRYAMAELEEADISAQLNDYKELKRLCLQIKQDRNPSVIVWIGTCTTEIIKMDLEGMAPRLEAEIQTPIVVARANGLDYAFTQGEDTVLAAMVQRCPSNAPEQNQIEKKSLVLFGSLPTNVATQLNLELERCGIQVAGWLPSQRYADLPVLNQNVYVCGINPFLSRTATTLMRRRKCKLISAPFPIGPDGTRAWLEKICSVFNVAPINLIERERLIWDSLEDYIALLRGKSVFFMGDNLLEISLARFLVRCGMIVYEIGIPYLDKRFQSAELQLLEKTCSEMNVAMPRIVEKPDNYNQIQRIRELQPDLAITGMAHANPLEARGINTKWSVEFTFAQIHGFTNARDILELVTRPLRRNKALENLGWNQLVKM.

Residues Cys23, Cys48, and Cys108 each contribute to the [4Fe-4S] cluster site.

It belongs to the BchN/ChlN family. Protochlorophyllide reductase is composed of three subunits; ChlL, ChlN and ChlB. Forms a heterotetramer of two ChlB and two ChlN subunits. [4Fe-4S] cluster serves as cofactor.

Its subcellular location is the plastid. The protein localises to the chloroplast. The enzyme catalyses chlorophyllide a + oxidized 2[4Fe-4S]-[ferredoxin] + 2 ADP + 2 phosphate = protochlorophyllide a + reduced 2[4Fe-4S]-[ferredoxin] + 2 ATP + 2 H2O. Its pathway is porphyrin-containing compound metabolism; chlorophyll biosynthesis (light-independent). Its function is as follows. Component of the dark-operative protochlorophyllide reductase (DPOR) that uses Mg-ATP and reduced ferredoxin to reduce ring D of protochlorophyllide (Pchlide) to form chlorophyllide a (Chlide). This reaction is light-independent. The NB-protein (ChlN-ChlB) is the catalytic component of the complex. The chain is Light-independent protochlorophyllide reductase subunit N from Auxenochlorella protothecoides (Green microalga).